A 369-amino-acid chain; its full sequence is uncharacterized protein (369 aa).

A signal peptide spans 1-19 (MKKLIAVAVLSACGSLAHA).

This is an uncharacterized protein from Haemophilus influenzae (strain ATCC 51907 / DSM 11121 / KW20 / Rd).